The sequence spans 350 residues: Casein kinase II subunit alpha' (350 aa).

Y13 carries the post-translational modification Phosphotyrosine. A phosphoserine mark is found at S18 and S21. The 286-residue stretch at 40 to 325 (YQLVRKLGRG…AKEAMEHPYF (286 aa)) folds into the Protein kinase domain. ATP contacts are provided by residues 46–54 (LGRGKYSEV) and K69. K97 carries the N6-acetyllysine modification. The Proton acceptor role is filled by D157. S288 carries the phosphoserine modification.

It belongs to the protein kinase superfamily. Ser/Thr protein kinase family. CK2 subfamily. In terms of assembly, heterotetramer composed of two catalytic subunits (alpha chain and/or alpha' chain) and two regulatory subunits (beta chains). The tetramer can exist as a combination of 2 alpha/2 beta, 2 alpha'/2 beta or 1 alpha/1 alpha'/2 beta subunits. Also part of a CK2-SPT16-SSRP1 complex composed of SSRP1, SUPT16H, CSNK2A1, CSNK2A2 and CSNK2B, which forms following UV irradiation. Interacts with RNPS1. Interacts with CSNK2A2IP (via C-terminus). Interacts with SIRT6; preventing CSNK2A2 localization to the nucleus. Interacts with HIRIP3. As to expression, highly expressed in brain, testis and mature epididymal spermatozoa. Weakly expressed in kidney, liver, lung, spleen and thymus (at protein level).

It localises to the nucleus. It is found in the cytoplasm. The catalysed reaction is L-seryl-[protein] + ATP = O-phospho-L-seryl-[protein] + ADP + H(+). It catalyses the reaction L-threonyl-[protein] + ATP = O-phospho-L-threonyl-[protein] + ADP + H(+). With respect to regulation, constitutively active protein kinase whose activity is not directly affected by phosphorylation. Seems to be regulated by level of expression and localization. Catalytic subunit of a constitutively active serine/threonine-protein kinase complex that phosphorylates a large number of substrates containing acidic residues C-terminal to the phosphorylated serine or threonine. Regulates numerous cellular processes, such as cell cycle progression, apoptosis and transcription, as well as viral infection. May act as a regulatory node which integrates and coordinates numerous signals leading to an appropriate cellular response. During mitosis, functions as a component of the p53/TP53-dependent spindle assembly checkpoint (SAC) that maintains cyclin-B-CDK1 activity and G2 arrest in response to spindle damage. Also required for p53/TP53-mediated apoptosis, phosphorylating 'Ser-392' of p53/TP53 following UV irradiation. Phosphorylates a number of DNA repair proteins in response to DNA damage, such as MDC1, RAD9A, RAD51 and HTATSF1, promoting their recruitment to DNA damage sites. Can also negatively regulate apoptosis. Phosphorylates the caspases CASP9 and CASP2 and the apoptotic regulator NOL3. Phosphorylation protects CASP9 from cleavage and activation by CASP8, and inhibits the dimerization of CASP2 and activation of CASP8. Regulates transcription by direct phosphorylation of RNA polymerases I, II, III and IV. Also phosphorylates and regulates numerous transcription factors including NF-kappa-B, STAT1, CREB1, IRF1, IRF2, ATF1, SRF, MAX, JUN, FOS, MYC and MYB. Phosphorylates Hsp90 and its co-chaperones FKBP4 and CDC37, which is essential for chaperone function. Regulates Wnt signaling by phosphorylating CTNNB1 and the transcription factor LEF1. Acts as an ectokinase that phosphorylates several extracellular proteins. May phosphorylate histone H2A on 'Ser-1'. The sequence is that of Casein kinase II subunit alpha' (Csnk2a2) from Mus musculus (Mouse).